The chain runs to 269 residues: tRNA pseudouridine synthase A (269 aa).

Catalysis depends on Asp-51, which acts as the Nucleophile. Residue Tyr-109 coordinates substrate.

The protein belongs to the tRNA pseudouridine synthase TruA family. In terms of assembly, homodimer.

It carries out the reaction uridine(38/39/40) in tRNA = pseudouridine(38/39/40) in tRNA. In terms of biological role, formation of pseudouridine at positions 38, 39 and 40 in the anticodon stem and loop of transfer RNAs. In Haemophilus influenzae (strain PittGG), this protein is tRNA pseudouridine synthase A.